A 350-amino-acid polypeptide reads, in one-letter code: Serine/threonine-protein kinase SRK2F (350 aa).

One can recognise a Protein kinase domain in the interval 4-260; it reads YDILRDLGSG…VPEIEKHPWF (257 aa). Residues 10–18 and Lys33 each bind ATP; that span reads LGSGNFGVA. Residue Asp123 is the Proton acceptor of the active site. Positions 270-303 form a coiled coil; it reads EEEKCDNGVEEEEEEEEKCRQSVEEIVKIIEEAR.

It belongs to the protein kinase superfamily. Ser/Thr protein kinase family. Expressed in seedlings.

The enzyme catalyses L-seryl-[protein] + ATP = O-phospho-L-seryl-[protein] + ADP + H(+). It carries out the reaction L-threonyl-[protein] + ATP = O-phospho-L-threonyl-[protein] + ADP + H(+). This Arabidopsis thaliana (Mouse-ear cress) protein is Serine/threonine-protein kinase SRK2F (SRK2F).